The primary structure comprises 256 residues: Short chain dehydrogenase adrF (256 aa).

Residues Ile11, Asp57, Arg119, Tyr151, Lys155, and Val184 each coordinate NADP(+). Catalysis depends on Tyr151, which acts as the Proton acceptor. The Lowers pKa of active site Tyr role is filled by Lys155.

The protein belongs to the short-chain dehydrogenases/reductases (SDR) family.

Its pathway is secondary metabolite biosynthesis; terpenoid biosynthesis. Its function is as follows. Short chain dehydrogenase; part of the gene cluster that mediates the biosynthesis of andrastins, meroterpenoid compounds that exhibit inhibitory activity against ras farnesyltransferase, suggesting that they could be promising leads for antitumor agents. The first step of the pathway is the synthesis of 3,5-dimethylorsellinic acid (DMOA) by the polyketide synthase adrD via condensation of one acetyl-CoA starter unit with 3 malonyl-CoA units and 2 methylations. DMAO is then converted to farnesyl-DMAO by the prenyltransferase adrG. The methyltransferase adrK catalyzes the methylation of the carboxyl group of farnesyl-DMAO to farnesyl-DMAO methyl ester which is further converted to epoxyfarnesyl-DMAO methyl ester by the FAD-dependent monooxygenase adrH. The terpene cyclase adrI then catalyzes the carbon skeletal rearrangement to generate the andrastin E, the first compound in the pathway having the andrastin scaffold, with the tetracyclic ring system. The post-cyclization tailoring enzymes adrF, adrE, adrJ, and adrA, are involved in the conversion of andrastin E into andrastin A. The short chain dehydrogenase adrF is responsible for the oxidation of the C-3 a hydroxyl group of andrastin E to yield the corresponding ketone, andrastin D. The ketoreductase adrE stereoselectively reduces the carbonyl moiety to reverse the stereochemistry of the C-3 position to yield andrastin F. The acetyltransferase adrJ is the acetyltransferase that attaches the acetyl group to the C-3 hydroxyl group of andrastin F to yield andrastin C. Finally, the cytochrome P450 monooxygenase adrA catalyzes two sequential oxidation reactions of the C-23 methyl group, to generate the corresponding alcohol andrastin B, and aldehyde andrastin A. The chain is Short chain dehydrogenase adrF from Penicillium roqueforti.